The primary structure comprises 1847 residues: MEQLTTLPRLGDPGAMEPWALPAWQHWTQGQGCKPGDASASIAATPTALQVKGLRFEESSEPAGAHSPGPIRNTDPEGTETVLPKLGQQAESPGYSCSRLEGEDAQAYKAKFNIGFGDRPNLELLRALGELQQHCTILKEENQMLRKSSFPETEEKVRRLKRKNAELAVIAKRLEERAQKLQETNMRGGEVPLCPDPDPVWSCARKALARQRARDLSETATALLAKDKQNAALQRECRELQARLSLVGKEGPQWLHMRDFDRLLRESQREVLRLQRQIALRNQREPLRPARSQGSTAPSSVGAPAPGAPGETVLEDDVESPQVVLGEPEKQLRVQQLESELCKKRKKCESLEQEARKKQRRCEELELQLRAAQNENARLVEENSRLSGKATEKEQVEWENAELKGQLLGVTQERDSALRKSQGLQSKLESLEQVLEHMRKVAQRRQQLEEEHEQARLSLQEKQEEVRRLQQAQAEAKREHEGAVQLLESTLDSMQARVRELEGQCRSQTERFSLLAQELQAFRLHPGPLDLLTSALGCNALGDHPPPHCCCSSPQPCQGSGPKDLDLPPGSPGRCTPKSSEPALATLTGVPRRTAKKAESLSNSSRSESIHNSPKSCPTPEVDTASEVEELEVDSVSLLPAAPEGHSGGGARIQVFLARYSYNPFEGPNENPEAELPLTAGEYIYIYGNMDEDGFFEGELMDGRRGLVPSNFVERVSDDDLLSTLPRELADSSHSSGPELSFLSGGGGGCSSGGQSSGGRSQPRPEEEATGDELSLSPPPEGLGEPLAVPYPRHITVLKQLAHSVVLAWELPPERVDLRGFHIFVNGELRQALGPGVPPKAVLENMDLRAGPLHVSVQALTSKGSSDPLRCCLAMGAGAGVVPSQLRIHRLTATSAEITWVPGNSNLAHAVYLNGEECPPARPSTYWATFCNLRPGTLYQARVEAQIPSQGPWEPGWERPELRAATLQFTTLPAGLPDAPLDVQAEPGPSPGIVMISWLPVTIDAAGTSNGVRVTGYAVYADGQKIMEVASPTAGSVLVEVSQLQLLQACHEVTVRTMSPHGESTDSIPAPVAPALASACQPARMSCLSPRPSPEVRTPLASVSPGLGYTSLPLRHPVPHGTQDSPASLSTEMSKGPQEEPPVPCSQEEAGSAVHRTSEEKRAMEPTLGQEGPDPVAPFLAKQAVECTSGDAGPTPCSTQEELTQKEPSTEVCHRGDLDSELKLRSEKEGMSELGVHLVNSLVDHSRNSDLSDIQEEEEEEEEEEELGSRPWSFQKQVAGNSIGENGAKPQPDPSCETDSDEEILEQILELPLQRLCSKKLFSIPEEEEEEDEEEGLGKPGPSSSSQDPSQPERALLGLDCESSQPQGPGLCPLSPELSGAREHLEDVLGVVGGNSRRRGGCSPEKLPNRKRPQDPREHCSRLLGNGGPQTSARPVPPRDRGSLPVIEGTRVGQEPGGRGRPGLSRRCPRGPAPESSLVSCLSPKCLEISIEYDSEDEQEVGSGGVSISSSCYPTDGEAWGTAAVGRPRGPVKVNSGSNTYLRLPAWEKGEPERRGRSAIGRTKEPPSRATETGESRGQDNSGRRGPQRRGARVLRTGTTELAPPRSPQEAPSHQDLPLRVFVALFDYDPISMSPNPDAGEEELPFREGQILKVFGDKDADGFYRGESGGRTGYIPCNMVAEVAVDTPTGRQQLLQRGFLPPNVLTQGSGNGPSVYPSAHTPGPPPKPRRSKKVELEDPAQLCPGPPKLIHSAALKTSRPMVAAFDYNPRENSPNMDVEAELPFRAGDVITVFGNMDDDGFYYGELNGQRGLVPSNFLEGPGPEAGGLDSGTSQAESQRTRRRRVQC.

Disordered stretches follow at residues 57–81, 282–318, and 560–626; these read EESSEPAGAHSPGPIRNTDPEGTET, NQREPLRPARSQGSTAPSSVGAPAPGAPGETVLEDDV, and SGPK…DTAS. 2 stretches are compositionally biased toward low complexity: residues 294 to 310 and 600 to 613; these read GSTAPSSVGAPAPGAPG and SLSNSSRSESIHNS. The region spanning 651–718 is the SH3 1 domain; it reads ARIQVFLARY…PSNFVERVSD (68 aa). The tract at residues 728–787 is disordered; that stretch reads ELADSSHSSGPELSFLSGGGGGCSSGGQSSGGRSQPRPEEEATGDELSLSPPPEGLGEPL. Gly residues predominate over residues 744 to 757; the sequence is SGGGGGCSSGGQSS. Fibronectin type-III domains follow at residues 789–880, 882–974, and 979–1077; these read VPYP…AGAG, VPSQ…TLPA, and APLD…PALA. Disordered regions lie at residues 1107–1174, 1191–1215, 1240–1307, 1322–1478, and 1514–1616; these read LGYT…EGPD, DAGPTPCSTQEELTQKEPSTEVCHR, NSLV…ILEQ, FSIP…ESSL, and PTDG…SHQD. Over residues 1122-1133 the composition is skewed to polar residues; that stretch reads TQDSPASLSTEM. Positions 1203-1215 are enriched in basic and acidic residues; sequence LTQKEPSTEVCHR. Residues 1253–1266 show a composition bias toward acidic residues; sequence DIQEEEEEEEEEEE. Over residues 1272–1284 the composition is skewed to polar residues; the sequence is WSFQKQVAGNSIG. 2 stretches are compositionally biased toward acidic residues: residues 1296–1305 and 1325–1335; these read CETDSDEEIL and PEEEEEEDEEE. The segment covering 1340–1352 has biased composition (low complexity); the sequence is PGPSSSSQDPSQP. Basic and acidic residues-rich tracts occupy residues 1412 to 1421 and 1546 to 1578; these read RPQDPREHCS and AWEKGEPERRGRSAIGRTKEPPSRATETGESRG. Residues 1617-1685 form the SH3 2 domain; it reads LPLRVFVALF…PCNMVAEVAV (69 aa). Disordered regions lie at residues 1701–1747 and 1818–1847; these read PPNV…PGPP and LEGPGPEAGGLDSGTSQAESQRTRRRRVQC. An SH3 3 domain is found at 1756–1823; it reads KTSRPMVAAF…PSNFLEGPGP (68 aa).

The protein belongs to the RIMBP family. Interacts with RIMS1 and RIMS2. Interacts with TSPO. Interacts with CACNA1A. As to expression, specifically expressed in brain. High expression level in the limbic system such as the nucleus accumbens, septum, and hippocampus, as well as on the cerebellum and pineal gland. Abundant in the CA1 region of the hippocampus.

The protein resides in the cytoplasm. Its subcellular location is the mitochondrion. In terms of biological role, required for synaptic transmission regulation. It probably controls the recruitement of voltage-gated calcium channels to the presynaptic membrane, and modulates neurotransmitter release. The protein is Peripheral-type benzodiazepine receptor-associated protein 1 of Rattus norvegicus (Rat).